The chain runs to 221 residues: Large ribosomal subunit protein uL3 (221 aa).

Residues 131-165 (HNQSRGPETHGSRHHRRPGSMGPIKGKIKGKKLPG) are disordered.

This sequence belongs to the universal ribosomal protein uL3 family. Part of the 50S ribosomal subunit. Forms a cluster with proteins L14 and L19.

In terms of biological role, one of the primary rRNA binding proteins, it binds directly near the 3'-end of the 23S rRNA, where it nucleates assembly of the 50S subunit. The polypeptide is Large ribosomal subunit protein uL3 (Phytoplasma australiense).